A 372-amino-acid chain; its full sequence is Alpha-1-antitrypsin homolog (372 aa).

The signal sequence occupies residues 1–19 (MPATCLLHTMLTLPSPSTR). N-linked (GlcNAc...) asparagine glycosylation is found at asparagine 214 and asparagine 226. An RCL region spans residues 328–347 (AATTIEIMPMSLPDTVILNR).

Belongs to the serpin family.

Its subcellular location is the secreted. This is Alpha-1-antitrypsin homolog from Cyprinus carpio (Common carp).